The primary structure comprises 158 residues: C-type lectin galactose-binding isoform (158 aa).

The N-terminal stretch at 1 to 23 (MGRFLLVTLSLLVVAFSLNGANS) is a signal peptide. 3 cysteine pairs are disulfide-bonded: cysteine 26-cysteine 37, cysteine 54-cysteine 154, and cysteine 129-cysteine 146. Positions 33–155 (RNGFCYKVFN…CTALRPFLCQ (123 aa)) constitute a C-type lectin domain. Ca(2+) is bound by residues glutamine 119, aspartate 121, and glutamate 127. The Galactose-binding signature appears at 119–121 (QPD). N-linked (GlcNAc...) asparagine glycosylation is present at asparagine 134. Ca(2+)-binding residues include asparagine 142 and aspartate 143.

The protein belongs to the true venom lectin family. In terms of assembly, homodimer; disulfide-linked. As to expression, expressed by the venom gland.

The protein resides in the secreted. Its function is as follows. Galactose-binding lectin that binds to and agglutinates erythrocytes in a calcium-dependent manner. The chain is C-type lectin galactose-binding isoform from Pseudechis porphyriacus (Red-bellied black snake).